A 404-amino-acid chain; its full sequence is tRNA (carboxymethyluridine(34)-5-O)-methyltransferase (404 aa).

Residue Ser-238 is modified to Phosphoserine.

In terms of assembly, interacts with TRM112A and TRM112B.

It catalyses the reaction 5-(carboxymethyl)uridine(34) in tRNA + S-adenosyl-L-methionine = 5-(2-methoxy-2-oxoethyl)uridine(34) in tRNA + S-adenosyl-L-homocysteine. Functionally, catalyzes the methylation of 5-carboxymethyl uridine to 5-methylcarboxymethyl uridine at the wobble position of the anticodon loop in tRNA via its methyltransferase domain. Catalyzes the last step in the formation of 5-methylcarboxymethyl uridine at the wobble position of the anticodon loop in target tRNA. This chain is tRNA (carboxymethyluridine(34)-5-O)-methyltransferase, found in Arabidopsis thaliana (Mouse-ear cress).